A 98-amino-acid polypeptide reads, in one-letter code: Co-chaperonin GroES (98 aa).

Belongs to the GroES chaperonin family. As to quaternary structure, heptamer of 7 subunits arranged in a ring. Interacts with the chaperonin GroEL.

Its subcellular location is the cytoplasm. Together with the chaperonin GroEL, plays an essential role in assisting protein folding. The GroEL-GroES system forms a nano-cage that allows encapsulation of the non-native substrate proteins and provides a physical environment optimized to promote and accelerate protein folding. GroES binds to the apical surface of the GroEL ring, thereby capping the opening of the GroEL channel. This Brucella abortus (strain S19) protein is Co-chaperonin GroES.